Reading from the N-terminus, the 295-residue chain is Protein U26 (295 aa).

A run of 8 helical transmembrane segments spans residues 4 to 24 (LTDS…LYTF), 31 to 51 (SPLG…LTFK), 66 to 86 (IVFL…VVMI), 103 to 123 (VMIM…SLFF), 183 to 203 (FTVE…FLSM), 218 to 238 (VFFK…ILSG), 243 to 263 (VCLY…SIML), and 274 to 294 (FYAG…MYFG).

It localises to the membrane. The sequence is that of Protein U26 (U26) from Human herpesvirus 6A (strain Uganda-1102) (HHV-6 variant A).